Reading from the N-terminus, the 86-residue chain is DNA replication protein 1 (86 aa).

Positions Leu-38 to Asn-67 form a coiled coil.

The protein belongs to the phi29likevirus DNA replication protein 1 family. As to quaternary structure, homomultimer. Self-associates into large complexes forming long filamentous structures. Interacts (via N-terminus) with the primer terminal protein. Interacts with host FtsZ protein.

It localises to the host membrane. Its function is as follows. Protein that assembles into highly ordered structures and provides a specific site for viral DNA replication. Probably anchors the viral DNA replisome to the host membrane. The sequence is that of DNA replication protein 1 (1) from Bacillus subtilis (Bacteriophage phi-29).